Reading from the N-terminus, the 1601-residue chain is Ras guanine nucleotide exchange factor glfB (1601 aa).

Disordered stretches follow at residues 43–140, 188–256, 310–461, and 475–630; these read PLLA…KEWD, DLLI…TTTT, SPQR…APDS, and LTTT…VKKG. Residues 45 to 55 are compositionally biased toward pro residues; sequence LAPPAPPPPPT. Residues 57–69 are compositionally biased toward polar residues; it reads QEINIGSGNSTFI. Residues 70-126 show a composition bias toward low complexity; sequence SSNNNNSNNNNNNNSNNNNNNNLNNSNNNNNNLNSNNNNNNNNNNNNNNGNNNNNSN. S197 carries the phosphoserine modification. At T201 the chain carries Phosphothreonine. Low complexity-rich tracts occupy residues 211–256 and 310–330; these read QQQQ…TTTT and SPQR…GVVV. Residues 331–359 show a composition bias toward acidic residues; it reads ADEESDSSEEESDSSEEESDEYTDEESET. Residues 384-398 are compositionally biased toward polar residues; sequence PLTSVNSNDNTSSGT. Low complexity-rich tracts occupy residues 435–458, 475–493, and 500–520; these read TAVA…TTVA, LTTT…TQSI, and SQQR…AITK. Residues 521–533 are compositionally biased toward basic and acidic residues; it reads PTKDAKDKKDPAK. Residues 558–577 are compositionally biased toward low complexity; the sequence is VPTGTSPPVSSSTSISSSTG. Positions 578-596 are enriched in basic and acidic residues; it reads IKKDKVKLSKEEKDRIKKE. In terms of domain architecture, Rho-GAP spans 649 to 836; the sequence is VRLTQLVLSN…LIIDNYVFLF (188 aa). One can recognise an N-terminal Ras-GEF domain in the interval 851 to 983; that stretch reads GKMIISEGSI…TINDFLKLPK (133 aa). The Ras-GEF domain occupies 1021-1255; sequence SAMEIAEQCT…ADLSLKCEPP (235 aa). The N-terminal F-actin-binding domain stretch occupies residues 1262 to 1601; it reads YNAPADIVDE…QESVPSTNAE (340 aa). Positions 1443–1474 are disordered; sequence SNVEKEKLSSSQEQQEQQEQKQQEQQQQQQEP. Residues 1465–1474 are compositionally biased toward low complexity; sequence QEQQQQQQEP.

In terms of assembly, interacts with gpaB and rapA. Interacts directly with F-actin. In terms of processing, simultaneously phosphorylated at Ser-197 and Thr-201 after cAMP stimulation.

The protein resides in the cytoplasm. The protein localises to the cell cortex. Its subcellular location is the cytoskeleton. It localises to the cell projection. It is found in the filopodium. The protein resides in the lamellipodium. In terms of biological role, gpaB-activated, rapA-specific guanine nucleotide exchange factor, involved in the regulation of the balance between Ras and Rap signaling at the leading edge of chemotaxing cells. Spatially localized activation of Rap and Ras induces F-actin polymerization at the leading edge of chemotaxing cells through the Rac, PI3K, and TORC2 pathways. Also acts as a key regulator of actin-driven membrane protrusions during processes such as phagocytosis and cytokinesis, possibly by modulating rapA signaling pathways. The chain is Ras guanine nucleotide exchange factor glfB from Dictyostelium discoideum (Social amoeba).